Reading from the N-terminus, the 757-residue chain is RNA-directed RNA polymerase catalytic subunit (757 aa).

The interval 53-82 (GRWTKNTETGAPQLNPIDGPLPKDNEPSGY) is disordered. Short sequence motifs (nuclear localization signal) lie at residues 187–195 (RKRRVRDNV) and 203–216 (RTIGKKKHRLNKRS). Residues 249-256 (RGFVYFVE) are promoter-binding site. In terms of domain architecture, RdRp catalytic spans 286–483 (VRKMMTNSQD…GINMSKKKSY (198 aa)).

It belongs to the influenza viruses polymerase PB1 family. In terms of assembly, influenza RNA polymerase is composed of three subunits: PB1, PB2 and PA. Interacts (via N-terminus) with PA (via C-terminus). Interacts (via C-terminus) with PB2 (via N-terminus); this interaction is essential for transcription initiation. Interacts (via C-terminus) with human PKP2 (via N-terminus); the interaction competitively inhibits the interaction between the RNA polymerase subunits PB1 and PB2. In terms of processing, phosphorylated by host PRKCA.

The protein localises to the host nucleus. It is found in the host cytoplasm. The enzyme catalyses RNA(n) + a ribonucleoside 5'-triphosphate = RNA(n+1) + diphosphate. Functionally, RNA-dependent RNA polymerase which is responsible for replication and transcription of virus RNA segments. The transcription of viral mRNAs occurs by a unique mechanism called cap-snatching. 5' methylated caps of cellular mRNAs are cleaved after 10-13 nucleotides by PA. In turn, these short capped RNAs are used as primers by PB1 for transcription of viral mRNAs. During virus replication, PB1 initiates RNA synthesis and copy vRNA into complementary RNA (cRNA) which in turn serves as a template for the production of more vRNAs. The chain is RNA-directed RNA polymerase catalytic subunit from Aves (Human).